The following is a 345-amino-acid chain: S-adenosylmethionine:tRNA ribosyltransferase-isomerase (345 aa).

This sequence belongs to the QueA family. Monomer.

The protein resides in the cytoplasm. It carries out the reaction 7-aminomethyl-7-carbaguanosine(34) in tRNA + S-adenosyl-L-methionine = epoxyqueuosine(34) in tRNA + adenine + L-methionine + 2 H(+). It functions in the pathway tRNA modification; tRNA-queuosine biosynthesis. Its function is as follows. Transfers and isomerizes the ribose moiety from AdoMet to the 7-aminomethyl group of 7-deazaguanine (preQ1-tRNA) to give epoxyqueuosine (oQ-tRNA). The sequence is that of S-adenosylmethionine:tRNA ribosyltransferase-isomerase from Helicobacter pylori (strain G27).